We begin with the raw amino-acid sequence, 224 residues long: MTARIGVVTFPGTLDDVDAARAARQVGAEVVSLWHADADLKGVDAVVVPGGFSYGDYLRAGAIARFAPVMDEVVAAADRGMPVLGICNGFQVLCEAGLLPGALTRNVGLHFICRDVWLRVASTSTAWTSRFEPDADLLVPLKSGEGRYVAPEKVLDELEGEGRVVFRYHDNVNGSLRDIAGICSANGRVVGLMPHPEHAIEALTGPSDDGLGLFYSALDAVLTG.

A Glutamine amidotransferase type-1 domain is found at 4–224 (RIGVVTFPGT…YSALDAVLTG (221 aa)). C87 serves as the catalytic Nucleophile. Catalysis depends on residues H195 and E197.

As to quaternary structure, part of the FGAM synthase complex composed of 1 PurL, 1 PurQ and 2 PurS subunits.

It localises to the cytoplasm. It carries out the reaction N(2)-formyl-N(1)-(5-phospho-beta-D-ribosyl)glycinamide + L-glutamine + ATP + H2O = 2-formamido-N(1)-(5-O-phospho-beta-D-ribosyl)acetamidine + L-glutamate + ADP + phosphate + H(+). The enzyme catalyses L-glutamine + H2O = L-glutamate + NH4(+). Its pathway is purine metabolism; IMP biosynthesis via de novo pathway; 5-amino-1-(5-phospho-D-ribosyl)imidazole from N(2)-formyl-N(1)-(5-phospho-D-ribosyl)glycinamide: step 1/2. Functionally, part of the phosphoribosylformylglycinamidine synthase complex involved in the purines biosynthetic pathway. Catalyzes the ATP-dependent conversion of formylglycinamide ribonucleotide (FGAR) and glutamine to yield formylglycinamidine ribonucleotide (FGAM) and glutamate. The FGAM synthase complex is composed of three subunits. PurQ produces an ammonia molecule by converting glutamine to glutamate. PurL transfers the ammonia molecule to FGAR to form FGAM in an ATP-dependent manner. PurS interacts with PurQ and PurL and is thought to assist in the transfer of the ammonia molecule from PurQ to PurL. The polypeptide is Phosphoribosylformylglycinamidine synthase subunit PurQ (Mycobacterium bovis (strain ATCC BAA-935 / AF2122/97)).